The following is an 88-amino-acid chain: Small ribosomal subunit protein uS17 (88 aa).

It belongs to the universal ribosomal protein uS17 family. In terms of assembly, part of the 30S ribosomal subunit.

In terms of biological role, one of the primary rRNA binding proteins, it binds specifically to the 5'-end of 16S ribosomal RNA. The chain is Small ribosomal subunit protein uS17 from Lactobacillus helveticus (strain DPC 4571).